Reading from the N-terminus, the 232-residue chain is Orotidine 5'-phosphate decarboxylase (232 aa).

Residues Asp-13, Lys-35, 62–71 (DLKFHDIPNT), Thr-122, Arg-182, Gln-191, Gly-211, and Arg-212 each bind substrate. The active-site Proton donor is Lys-64.

It belongs to the OMP decarboxylase family. Type 1 subfamily. In terms of assembly, homodimer.

The catalysed reaction is orotidine 5'-phosphate + H(+) = UMP + CO2. It participates in pyrimidine metabolism; UMP biosynthesis via de novo pathway; UMP from orotate: step 2/2. Functionally, catalyzes the decarboxylation of orotidine 5'-monophosphate (OMP) to uridine 5'-monophosphate (UMP). In Pseudomonas fluorescens (strain SBW25), this protein is Orotidine 5'-phosphate decarboxylase.